We begin with the raw amino-acid sequence, 207 residues long: Nuclear transcription factor Y subunit beta (207 aa).

The a domain stretch occupies residues 1 to 52 (MTMDGDSSTTDASQLGISADYIGGSHYVIQPHDDTEDSMNDHEDTNGSKESF). A disordered region spans residues 27-52 (YVIQPHDDTEDSMNDHEDTNGSKESF). A compositionally biased stretch (basic and acidic residues) spans 39 to 52 (MNDHEDTNGSKESF). The segment at 53–142 (REQDIYLPIA…PLKLYLQKFR (90 aa)) is b domain. The DNA-binding element occupies 59-65 (LPIANVA). The tract at residues 86–97 (VQECVSEFISFI) is subunit association domain (SAD). Lysine 140 participates in a covalent cross-link: Glycyl lysine isopeptide (Lys-Gly) (interchain with G-Cter in ubiquitin). The tract at residues 143-207 (EAMKGEKGIG…ISGVQQIQFS (65 aa)) is c domain.

The protein belongs to the NFYB/HAP3 subunit family. In terms of assembly, heterotrimeric transcription factor composed of three components, NF-YA, NF-YB and NF-YC. NF-YB and NF-YC must interact and dimerize for NF-YA association and DNA binding. Interacts with C1QBP. In terms of processing, monoubiquitination at Lys-140 plays an important role in transcriptional activation by allowing the deposition of histone H3 methylations as well as histone H2B monoubiquitination at 'Lys-121'.

It localises to the nucleus. Functionally, component of the sequence-specific heterotrimeric transcription factor (NF-Y) which specifically recognizes a 5'-CCAAT-3' box motif found in the promoters of its target genes. NF-Y can function as both an activator and a repressor, depending on its interacting cofactors. In Homo sapiens (Human), this protein is Nuclear transcription factor Y subunit beta (NFYB).